The sequence spans 409 residues: Argininosuccinate synthase (409 aa).

ATP is bound by residues 8–16 (AYSGGLDTS) and Ala34. L-citrulline is bound at residue Tyr85. Gly115 contributes to the ATP binding site. Residues Thr117, Asn121, and Asp122 each contribute to the L-aspartate site. Asn121 serves as a coordination point for L-citrulline. Residues Arg125, Ser178, Ser187, Glu268, and Tyr280 each coordinate L-citrulline.

The protein belongs to the argininosuccinate synthase family. Type 1 subfamily. Homotetramer.

It localises to the cytoplasm. The enzyme catalyses L-citrulline + L-aspartate + ATP = 2-(N(omega)-L-arginino)succinate + AMP + diphosphate + H(+). It functions in the pathway amino-acid biosynthesis; L-arginine biosynthesis; L-arginine from L-ornithine and carbamoyl phosphate: step 2/3. The polypeptide is Argininosuccinate synthase (Thermotoga petrophila (strain ATCC BAA-488 / DSM 13995 / JCM 10881 / RKU-1)).